Consider the following 432-residue polypeptide: Adenylosuccinate synthetase (432 aa).

GTP-binding positions include 13-19 and 41-43; these read GDEGKGK and GHT. D14 acts as the Proton acceptor in catalysis. Mg(2+)-binding residues include D14 and G41. IMP is bound by residues 14–17, 39–42, T130, R144, Q225, T240, and R304; these read DEGK and NAGH. Catalysis depends on H42, which acts as the Proton donor. 300–306 serves as a coordination point for substrate; the sequence is ATTGRRR. Residues R306, 332–334, and 415–417 contribute to the GTP site; these read KLD and STG.

The protein belongs to the adenylosuccinate synthetase family. Homodimer. Mg(2+) serves as cofactor.

The protein resides in the cytoplasm. The catalysed reaction is IMP + L-aspartate + GTP = N(6)-(1,2-dicarboxyethyl)-AMP + GDP + phosphate + 2 H(+). It participates in purine metabolism; AMP biosynthesis via de novo pathway; AMP from IMP: step 1/2. Functionally, plays an important role in the de novo pathway of purine nucleotide biosynthesis. Catalyzes the first committed step in the biosynthesis of AMP from IMP. In Salmonella arizonae (strain ATCC BAA-731 / CDC346-86 / RSK2980), this protein is Adenylosuccinate synthetase.